The following is a 465-amino-acid chain: Mothers against decapentaplegic homolog 1 (465 aa).

The 125-residue stretch at 12-136 (PAVKRLLGWK…YKRVESPVLP (125 aa)) folds into the MH1 domain. Zn(2+) is bound by residues Cys64, Cys109, Cys121, and His126. Residues 161 to 240 (QNEPHMPHNA…EDQMTHDTSQ (80 aa)) are disordered. Residues 179 to 210 (PNSHPFPHSPNSSYPNSPGSSSSTYPHSPASS) are compositionally biased toward low complexity. An MH2 domain is found at 271–465 (WCSIVYYELN…SPHNPISSVS (195 aa)). Phosphoserine occurs at positions 463 and 465.

It belongs to the dwarfin/SMAD family. Found in a complex with SMAD4 and YY1. Interacts with HGS, NANOG and ZCCHC12. Upon C-terminus phosphorylation: forms trimers with another SMAD1 and the co-SMAD SMAD4. Interacts with PEBP2-alpha subunit, CREB-binding protein (CBP), p300, SMURF1, SMURF2, USP15 and HOXC8. Associates with ZNF423 or ZNF521 in response to BMP2 leading to activate transcription of BMP target genes. Interacts with SKOR1. Interacts (via MH2 domain) with LEMD3. Binding to LEMD3 results in at least a partial reduction of receptor-mediated phosphorylation. Forms a ternary complex with PSMB4 and OAZ1 before PSMB4 is incorporated into the 20S proteasome. Found in a macromolecular complex with FAM83G. Interacts (via MH2 domain) with FAM83G (via MH2 domain); in a SMAD4-independent manner. Interacts with ZC3H3. Interacts with TMEM119. Interacts (via MH1 and MH2 domains) with ZNF8. Interacts with RANBP3L; the interaction increases when SMAD1 is not phosphorylated and mediates SMAD1 nuclear export. Interacts with EGR1; this interaction inhibits SMAD1 dephosphorylation. Interacts with SMAD6. Interacts with YAP1. Phosphorylation of the C-terminal SVS motif by BMP type 1 receptor kinase activates SMAD1 by promoting dissociation from the receptor and trimerization with SMAD4. Phosphorylation by ERK2 MAP kinase in response to EGF or HGF prevents SMAD1 nuclear accumulation and transcriptional activity in response to BMP. Dephosphorylation, probably by PPM1A, induces its export from the nucleus to the cytoplasm. Dephosphorylation is inhibited by association with EGR1. Phosphorylation by CDK8/9 creates binding sites for YAP1, and subsequent phosphorylation by GSK3 switches off YAP1 binding and adds binding sites for SMURF1. In terms of processing, ubiquitinated by SMAD-specific E3 ubiquitin ligase SMURF1, leading to its degradation. Monoubiquitinated, leading to prevent DNA-binding. Deubiquitination by USP15 alleviates inhibition and promotes activation of TGF-beta target genes. Dephosphorylation, probably by PPM1A, induces its export from the nucleus to the cytoplasm. Phospho-SMAD1 is ubiquitinated by CHIP leading to disruption of the SMAD1-SMAD4 complex.

It is found in the cytoplasm. It localises to the nucleus. Functionally, transcriptional modulator that plays a role in various cellular processes, including embryonic development, cell differentiation, and tissue homeostasis. Upon BMP ligand binding to their receptors at the cell surface, is phosphorylated by activated type I BMP receptors (BMPRIs) and associates with SMAD4 to form an heteromeric complex which translocates into the nucleus acting as transcription factor. In turn, the hetero-trimeric complex recognizes cis-regulatory elements containing Smad Binding Elements (SBEs) to modulate the outcome of the signaling network. SMAD1/OAZ1/PSMB4 complex mediates the degradation of the CREBBP/EP300 repressor SNIP1. This chain is Mothers against decapentaplegic homolog 1 (SMAD1), found in Coturnix japonica (Japanese quail).